We begin with the raw amino-acid sequence, 349 residues long: tRNA-specific 2-thiouridylase MnmA (349 aa).

ATP-binding positions include 7–14 (GLSGGVDS) and leucine 33. Cysteine 94 (nucleophile) is an active-site residue. The cysteines at positions 94 and 193 are disulfide-linked. Residue glycine 119 participates in ATP binding. Positions 143 to 145 (KDQ) are interaction with tRNA. Residue cysteine 193 is the Cysteine persulfide intermediate of the active site. The segment at 298–299 (RY) is interaction with tRNA.

The protein belongs to the MnmA/TRMU family.

The protein resides in the cytoplasm. It carries out the reaction S-sulfanyl-L-cysteinyl-[protein] + uridine(34) in tRNA + AH2 + ATP = 2-thiouridine(34) in tRNA + L-cysteinyl-[protein] + A + AMP + diphosphate + H(+). In terms of biological role, catalyzes the 2-thiolation of uridine at the wobble position (U34) of tRNA, leading to the formation of s(2)U34. In Gloeothece citriformis (strain PCC 7424) (Cyanothece sp. (strain PCC 7424)), this protein is tRNA-specific 2-thiouridylase MnmA.